We begin with the raw amino-acid sequence, 94 residues long: Non-specific lipid-transfer protein C4 (94 aa).

Residues 1–26 (MAASKGNAAAAACALVLVLLAVGAEA) form the signal peptide. 4 disulfides stabilise this stretch: Cys34–Cys72, Cys44–Cys59, Cys60–Cys85, and Cys70–Cys92. Residue Asn91 is glycosylated (N-linked (GlcNAc...) asparagine).

It belongs to the plant LTP family.

Lipid-transfer protein that may be regulated by the transcription factor UDT1 in developing anthers and play a role in tapetum development. In Oryza sativa subsp. japonica (Rice), this protein is Non-specific lipid-transfer protein C4.